A 164-amino-acid polypeptide reads, in one-letter code: Aspartate carbamoyltransferase regulatory chain (164 aa).

The Zn(2+) site is built by cysteine 116, cysteine 121, cysteine 146, and cysteine 149.

Belongs to the PyrI family. As to quaternary structure, contains catalytic and regulatory chains. Zn(2+) is required as a cofactor.

Involved in allosteric regulation of aspartate carbamoyltransferase. This Staphylothermus marinus (strain ATCC 43588 / DSM 3639 / JCM 9404 / F1) protein is Aspartate carbamoyltransferase regulatory chain.